We begin with the raw amino-acid sequence, 267 residues long: DNA repair protein RecO (267 aa).

This sequence belongs to the RecO family.

Its function is as follows. Involved in DNA repair and RecF pathway recombination. The sequence is that of DNA repair protein RecO from Prochlorococcus marinus (strain MIT 9313).